The primary structure comprises 441 residues: Homogentisate 1,2-dioxygenase (441 aa).

His-297 serves as the catalytic Proton acceptor. 2 residues coordinate Fe cation: His-340 and Glu-346. Residues Tyr-355 and His-376 each coordinate homogentisate. Fe cation is bound at residue His-376.

Belongs to the homogentisate dioxygenase family. Hexamer; dimer of trimers. Requires Fe cation as cofactor.

It catalyses the reaction homogentisate + O2 = 4-maleylacetoacetate + H(+). It functions in the pathway amino-acid degradation; L-phenylalanine degradation; acetoacetate and fumarate from L-phenylalanine: step 4/6. In terms of biological role, involved in the catabolism of homogentisate (2,5-dihydroxyphenylacetate or 2,5-OH-PhAc), a central intermediate in the degradation of phenylalanine and tyrosine. Catalyzes the oxidative ring cleavage of the aromatic ring of homogentisate to yield maleylacetoacetate. This Streptomyces coelicolor (strain ATCC BAA-471 / A3(2) / M145) protein is Homogentisate 1,2-dioxygenase.